Reading from the N-terminus, the 838-residue chain is MKLLPREIEKLELHQAGFLAQKRLARGIRLNYTEAVALIATQILEFIRDGDKSVAELMDIGRQLLGRRQVLPAVLHLLYTVQVEGTFRDGTKLVTVHEPISLENGNLELALHGSFLPVPSLDKFPEVHEGVIIPGDMKYGDGSIIINHGRKAVVLKVVNTGDRPVQVGSHYHFIEVNPLLVFDRRKALGMRLNIPAGTAVRFEPGERKSVVLVNIGGNKVIRGGNGIVDGLVDDVNWTVLMETMERRGFKHLEDIDASEGIAGEDPRFTTMISREKYANMYGPTTGDKLRLGDTNLYARIEKDYTVYGDECVFGGGKVLREGMGQGIEQAEALSLDTVITNSVIIDYSGIYKADIGIKNGHIVGIGKAGNPDTMHGVQNNMLIGNKTEVIAGEGMIVTAGAIDCHVHFICPQLVYEAVSSGITTMVGGGTGPAYGTRATTCTPSPFDMKLMLQSTDSLPLNFGFTGKGNTAKPLELRHIVEAGAMGLKLHEDWGTTPAAIDNCLAVAEEYDIQVNIHTDTLNESGFVEHTINAFRGRTIHTYHSEGAGGGHAPDIIRVCGVKNVLPSSTNPTRPYTKNTVDEHLDMLMVCHHLDKNIPEDVAFAESRIRAETIAAEDILHDMGAISIISSDSQAMGRIGEVISRTWQTADKMKAQRGAIDPNMADDDNSRIKRYIAKYTINPAIANGFADLIGSVEVKKLADLVIWQPAFFGAKPEMIIKGGNIAWANMGDANASIPTPEPVISRPMFGAFGKAGSENSVAFVSKAALRKGVKELYGLKKRVVAVSNVRQLTKLDMKLNDALPEITVDPETYVVTANGEVLTCAPADSVPLSRNYFLF.

Residues 400-838 (GAIDCHVHFI…VPLSRNYFLF (439 aa)) form the Urease domain. The Ni(2+) site is built by His405, His407, and Lys488. Lys488 carries the N6-carboxylysine modification. His490 is a binding site for substrate. Ni(2+) contacts are provided by His517 and His543. His591 serves as the catalytic Proton donor. Asp631 provides a ligand contact to Ni(2+).

In the C-terminal section; belongs to the metallo-dependent hydrolases superfamily. Urease alpha subunit family. As to quaternary structure, homohexamer. Other oligomeric forms may exist depending on pH and presence of salts. Ni(2+) is required as a cofactor. In terms of processing, carboxylation allows a single lysine to coordinate two nickel ions.

The catalysed reaction is urea + 2 H2O + H(+) = hydrogencarbonate + 2 NH4(+). It participates in nitrogen metabolism; urea degradation; CO(2) and NH(3) from urea (urease route): step 1/1. Requires the three urease accessory proteins URED, UREF AND UREG for its activation. Functionally, urea hydrolase involved in nitrogen recycling from ureide, purine, and arginine catabolism. This is Urease from Arabidopsis thaliana (Mouse-ear cress).